Reading from the N-terminus, the 92-residue chain is MTRSLKKNPFVANHLLGKIEKLNMRAEKEIIVTWSRASTIIPIMIGHTIAIHNGKEHLPIYITESMVGHKLGEFAPTLTFRGHARNDKKSRR.

It belongs to the universal ribosomal protein uS19 family.

The protein localises to the plastid. Its subcellular location is the chloroplast. Its function is as follows. Protein S19 forms a complex with S13 that binds strongly to the 16S ribosomal RNA. This is Small ribosomal subunit protein uS19c from Nandina domestica (Heavenly bamboo).